The primary structure comprises 593 residues: Multidrug resistance-like ATP-binding protein MdlB (593 aa).

Residues 1-25 (MRSFSQLWPTLKRLLAYGSPWRKPL) lie on the Cytoplasmic side of the membrane. The 286-residue stretch at 25–310 (LGIAVLMMWV…LTTQQAMLQQ (286 aa)) folds into the ABC transmembrane type-1 domain. A helical membrane pass occupies residues 26–46 (GIAVLMMWVAAAAEVSGPLLI). At 47–62 (SYFIDNMVAKNNLPLK) the chain is on the periplasmic side. Residues 63 to 83 (VVAGLAAAYVGLQLFAAGLHY) form a helical membrane-spanning segment. Over 84–140 (AQSLLFNRAAVGVVQQLRTDVMDAALRQPLSEFDTQPVGQVISRVTNDTEVIRDLYV) the chain is Cytoplasmic. A helical transmembrane segment spans residues 141–161 (TVVATVLRSAALVGAMLVAMF). Residues 162-164 (SLD) are Periplasmic-facing. Residues 165–185 (WRMALVAIMIFPVVLVVMVIY) traverse the membrane as a helical segment. Topologically, residues 186 to 254 (QRYSTPIVRR…LRLDGFLLRP (69 aa)) are cytoplasmic. Residues 255 to 275 (LLSLFSSLILCGLLMLFGFSA) traverse the membrane as a helical segment. At 276-278 (SGT) the chain is on the periplasmic side. A helical membrane pass occupies residues 279–299 (IEVGVLYAFISYLGRLNEPLI). Residues 300–593 (ELTTQQAMLQ…SVREEESLSA (294 aa)) are Cytoplasmic-facing. The 234-residue stretch at 341–574 (IEVDNVSFAY…QGRYWQMYQL (234 aa)) folds into the ABC transporter domain. 374–381 (GHTGSGKS) is a binding site for ATP.

It belongs to the ABC transporter superfamily. Drug exporter-2 (TC 3.A.1.117) family.

It is found in the cell inner membrane. The catalysed reaction is ATP + H2O + xenobioticSide 1 = ADP + phosphate + xenobioticSide 2.. This chain is Multidrug resistance-like ATP-binding protein MdlB (mdlB), found in Escherichia coli O6:H1 (strain CFT073 / ATCC 700928 / UPEC).